Here is a 1360-residue protein sequence, read N- to C-terminus: DNA-directed RNA polymerase subunit beta (1360 aa).

The protein belongs to the RNA polymerase beta chain family. The RNAP catalytic core consists of 2 alpha, 1 beta, 1 beta' and 1 omega subunit. When a sigma factor is associated with the core the holoenzyme is formed, which can initiate transcription.

It carries out the reaction RNA(n) + a ribonucleoside 5'-triphosphate = RNA(n+1) + diphosphate. Functionally, DNA-dependent RNA polymerase catalyzes the transcription of DNA into RNA using the four ribonucleoside triphosphates as substrates. This Desulfotalea psychrophila (strain LSv54 / DSM 12343) protein is DNA-directed RNA polymerase subunit beta.